The following is a 496-amino-acid chain: MADSEDGDHVATTTTEQRYDDDGHLVPSSGGQEEEGSGGRDVVVPGGHVAEDYRSGVGVPVGRDAGGATSSPPQPVHVTPSILVGSIHAPVFQGELVGMKFGVGSGSMGAGTSATRRLPATGFGALPTSSMAEDSADHADDDHLAEEEEEEEEEHYIDDGPLVPSSGGQEEEGSGGRHVFVPGGHDGEEDHPDDLVADLDLDLLVDGVVGPVPGGHLNADAPAFVPTTRGRQDLYSALSSSAPAAGYRYRHYITSSALAEAGHVSPFLGLPYATAFDSPLDRELVGPSSAPPPCSAASRAWLVRCSSPLSDSEWTRRSILAREAAHTPASTVTGRGRFEFVPIPGAPYAPPPSFAPIAAGAGPAARPLQQLAFGLEEHKTKLCAEYYSRGLGCPRGNTCKYAHGEDDLRLVVAVSSLADAGEGSSSSDSSFAALGGEDKYKTKLCKTFTSGGLCLFAANCRFAHGEVELGKKEPCWYFFSGQTCPRGDTCGFRHSY.

2 disordered regions span residues 1–77 (MADS…QPVH) and 108–194 (MGAG…HPDD). The segment covering 143 to 156 (HLAEEEEEEEEEHY) has biased composition (acidic residues). 3 consecutive C3H1-type zinc fingers follow at residues 377-406 (EHKT…HGED), 439-467 (KYKT…HGEV), and 469-496 (LGKK…RHSY).

This chain is Putative zinc finger CCCH domain-containing protein 48, found in Oryza sativa subsp. japonica (Rice).